A 410-amino-acid polypeptide reads, in one-letter code: Probable serine/threonine-protein kinase PBL9 (410 aa).

A lipid anchor (N-myristoyl glycine) is attached at Gly-2. Residue Cys-4 is the site of S-palmitoyl cysteine attachment. Residues 11–46 (AESSGASTKYDAKDIGSLGSKASSVSVRPSPRTEGE) form a disordered region. Positions 68–352 (FRPDSVLGEG…MSEVVSHLEH (285 aa)) constitute a Protein kinase domain. ATP is bound by residues 74–82 (LGEGGFGCV) and Lys-106. At Tyr-151 the chain carries Phosphotyrosine. Asp-203 (proton acceptor) is an active-site residue. Residues Ser-207 and Ser-237 each carry the phosphoserine modification. Phosphothreonine occurs at positions 238 and 243. At Tyr-251 the chain carries Phosphotyrosine.

It belongs to the protein kinase superfamily. Ser/Thr protein kinase family. In terms of assembly, interacts with the Xanthomonas campestris effector XopAC/AvrAC. Expressed in stomatal guard cells of leaves.

The protein resides in the cell membrane. It carries out the reaction L-seryl-[protein] + ATP = O-phospho-L-seryl-[protein] + ADP + H(+). It catalyses the reaction L-threonyl-[protein] + ATP = O-phospho-L-threonyl-[protein] + ADP + H(+). In terms of biological role, possible bi-functional kinase. In vitro, it exhibits serine/threonine activity. In vivo, can phosphorylate tyrosine residues of limited substrates. May be involved in plant defense signaling. The polypeptide is Probable serine/threonine-protein kinase PBL9 (Arabidopsis thaliana (Mouse-ear cress)).